A 294-amino-acid chain; its full sequence is MSMIYITLNIIAYVIDVRSLILDVRRLVFSLILGIVEGLTEFLPISSTGHMILVENILNCMDDSVIAFTVIIQLGAILSITKIFWSQLYGMSMICIKKIFFKQHDDHNHLCIRHIFLGTFPGIMLGMIFYEKIGLIFELTYIMYGLIIGGIFLLVGELCASKEPRVSRINNITYLQAFLIGCFQCLAFWPGFSRAGATIGGGLVVGLDRRISSEFSFFLAVPIIFGSAVLTLYHYRSCIGLMDVLLLIAGSATAFFIALFTVRYFLKIVKNVSLIPFAIYRFLLAGGIYWGLMT.

The next 9 helical transmembrane spans lie at 2–22 (SMIYITLNIIAYVIDVRSLIL), 27–47 (LVFSLILGIVEGLTEFLPISS), 65–85 (VIAFTVIIQLGAILSITKIFW), 110–130 (LCIRHIFLGTFPGIMLGMIFY), 135–155 (LIFELTYIMYGLIIGGIFLLV), 172–192 (ITYLQAFLIGCFQCLAFWPGF), 215–235 (FSFFLAVPIIFGSAVLTLYHY), 239–259 (IGLMDVLLLIAGSATAFFIAL), and 272–292 (VSLIPFAIYRFLLAGGIYWGL).

The protein belongs to the UppP family.

The protein resides in the cell inner membrane. The enzyme catalyses di-trans,octa-cis-undecaprenyl diphosphate + H2O = di-trans,octa-cis-undecaprenyl phosphate + phosphate + H(+). Its function is as follows. Catalyzes the dephosphorylation of undecaprenyl diphosphate (UPP). Confers resistance to bacitracin. This Blochmanniella pennsylvanica (strain BPEN) protein is Undecaprenyl-diphosphatase.